The following is a 191-amino-acid chain: Elongation factor P 1 (191 aa).

The protein belongs to the elongation factor P family.

The protein resides in the cytoplasm. The protein operates within protein biosynthesis; polypeptide chain elongation. Functionally, involved in peptide bond synthesis. Stimulates efficient translation and peptide-bond synthesis on native or reconstituted 70S ribosomes in vitro. Probably functions indirectly by altering the affinity of the ribosome for aminoacyl-tRNA, thus increasing their reactivity as acceptors for peptidyl transferase. This Lactobacillus acidophilus (strain ATCC 700396 / NCK56 / N2 / NCFM) protein is Elongation factor P 1.